The primary structure comprises 78 residues: RNA-binding protein KhpA (78 aa).

The KH domain maps to 29–78 (TIIYELTVAKPDIGKIIGKEGRTIKAIRTLLVSVASRNNVKVSLEIMEDK).

The protein belongs to the KhpA RNA-binding protein family.

The protein resides in the cytoplasm. In terms of biological role, a probable RNA-binding protein. This Chlamydia caviae (strain ATCC VR-813 / DSM 19441 / 03DC25 / GPIC) (Chlamydophila caviae) protein is RNA-binding protein KhpA.